Here is a 438-residue protein sequence, read N- to C-terminus: Na(+)/H(+) antiporter NhaA (438 aa).

The next 11 membrane-spanning stretches (helical) occupy residues 23–43 (FGGI…NSFL), 62–82 (FFIG…LFFL), 104–124 (SFPV…YFFL), 133–153 (GFGI…MLLG), 162–182 (VFLI…IALF), 185–205 (TNLK…LALL), 221–241 (VLLW…AVVL), 302–322 (FLAP…NAGV), 337–357 (FGVI…ITFI), 372–392 (WWHI…SMFI), and 410–430 (IAIL…LFAL).

Belongs to the NhaA Na(+)/H(+) (TC 2.A.33) antiporter family.

It is found in the cell inner membrane. The catalysed reaction is Na(+)(in) + 2 H(+)(out) = Na(+)(out) + 2 H(+)(in). Its function is as follows. Na(+)/H(+) antiporter that extrudes sodium in exchange for external protons. In Helicobacter pylori (strain P12), this protein is Na(+)/H(+) antiporter NhaA.